The following is a 103-amino-acid chain: Histone H4 (103 aa).

Over residues 1–14 the composition is skewed to gly residues; it reads MSGRGKGGKGLGKG. The disordered stretch occupies residues 1–20; it reads MSGRGKGGKGLGKGGAKRHR. S2 is modified (N-acetylserine). K6 and K13 each carry N6-acetyl-N6-methyllysine; alternate. Residue K17 is modified to N6-acetyllysine. A DNA-binding region spans residues 17-21; the sequence is KRHRR.

Belongs to the histone H4 family. In terms of assembly, the nucleosome is a histone octamer containing two molecules each of H2A, H2B, H3 and H4 assembled in one H3-H4 heterotetramer and two H2A-H2B heterodimers. The octamer wraps approximately 147 bp of DNA.

The protein resides in the nucleus. The protein localises to the chromosome. Core component of nucleosome. Nucleosomes wrap and compact DNA into chromatin, limiting DNA accessibility to the cellular machineries which require DNA as a template. Histones thereby play a central role in transcription regulation, DNA repair, DNA replication and chromosomal stability. DNA accessibility is regulated via a complex set of post-translational modifications of histones, also called histone code, and nucleosome remodeling. This Mytilus chilensis (Chilean blue mussel) protein is Histone H4.